The following is a 319-amino-acid chain: Ribonucleoside-diphosphate reductase small chain (319 aa).

The tract at residues 313 to 319 is interaction with R1; that stretch reads FSLDVDF.

It belongs to the ribonucleoside diphosphate reductase small chain family. As to quaternary structure, interacts with RNR1/OPG080 subunit. Can interact with host RNR1 supunit. Fe cation is required as a cofactor.

The enzyme catalyses a 2'-deoxyribonucleoside 5'-diphosphate + [thioredoxin]-disulfide + H2O = a ribonucleoside 5'-diphosphate + [thioredoxin]-dithiol. In terms of biological role, ribonucleoside-diphosphate reductase holoenzyme provides the precursors necessary for viral DNA synthesis. Allows virus growth in non-dividing cells. Catalyzes the biosynthesis of deoxyribonucleotides from the corresponding ribonucleotides. This is Ribonucleoside-diphosphate reductase small chain (OPG048) from Cynomys gunnisoni (Gunnison's prairie dog).